The primary structure comprises 488 residues: Receptor-like tyrosine-protein kinase kin-15 (488 aa).

An N-terminal signal peptide occupies residues 1 to 26 (MCLKMRYERIKYILLFSLMHLVYSNS). Residue Asn-25 is glycosylated (N-linked (GlcNAc...) asparagine). The Extracellular segment spans residues 27–50 (TFESFTENPHISSQISNVLYMDQM). A helical membrane pass occupies residues 51 to 70 (FIIYILICILLILISVIVYL). Residues 71–488 (SKRYSQQMMQ…SKLEDWIRRD (418 aa)) lie on the Cytoplasmic side of the membrane. In terms of domain architecture, Protein kinase spans 144-458 (EISEDKLGSG…VEFFEEHLSV (315 aa)). ATP-binding positions include 150 to 158 (LGSGFFGEV) and Lys-183. Asp-319 serves as the catalytic Proton acceptor.

It belongs to the protein kinase superfamily. Tyr protein kinase family. Hypodermal cells.

The protein localises to the cell membrane. The enzyme catalyses L-tyrosyl-[protein] + ATP = O-phospho-L-tyrosyl-[protein] + ADP + H(+). In terms of biological role, may be specifically involved in cell-cell interactions regulating cell fusions that generate the hypodermis during postembryonic development. It has a role in the development of the HYP7 hypodermal syncytium. This Caenorhabditis elegans protein is Receptor-like tyrosine-protein kinase kin-15 (kin-15).